A 57-amino-acid chain; its full sequence is UPF0434 protein Spea_1772 (57 aa).

This sequence belongs to the UPF0434 family.

This is UPF0434 protein Spea_1772 from Shewanella pealeana (strain ATCC 700345 / ANG-SQ1).